The chain runs to 404 residues: L-cysteine:1D-myo-inositol 2-amino-2-deoxy-alpha-D-glucopyranoside ligase (404 aa).

Cysteine 35 provides a ligand contact to Zn(2+). L-cysteinyl-5'-AMP is bound by residues 35–38 (CGIT), threonine 50, and 73–75 (NVT). A 'HIGH' region motif is present at residues 37–47 (ITPYDATHLGH). The short motif at 178 to 183 (ERGGDP) is the 'ERGGDP' region element. Tryptophan 219 is a binding site for L-cysteinyl-5'-AMP. Position 223 (cysteine 223) interacts with Zn(2+). 241-243 (GND) is an L-cysteinyl-5'-AMP binding site. Histidine 248 is a binding site for Zn(2+). Isoleucine 275 contributes to the L-cysteinyl-5'-AMP binding site. Positions 281–285 (KMSKS) match the 'KMSKS' region motif.

Belongs to the class-I aminoacyl-tRNA synthetase family. MshC subfamily. In terms of assembly, monomer. It depends on Zn(2+) as a cofactor.

It carries out the reaction 1D-myo-inositol 2-amino-2-deoxy-alpha-D-glucopyranoside + L-cysteine + ATP = 1D-myo-inositol 2-(L-cysteinylamino)-2-deoxy-alpha-D-glucopyranoside + AMP + diphosphate + H(+). Catalyzes the ATP-dependent condensation of GlcN-Ins and L-cysteine to form L-Cys-GlcN-Ins. In Salinispora tropica (strain ATCC BAA-916 / DSM 44818 / JCM 13857 / NBRC 105044 / CNB-440), this protein is L-cysteine:1D-myo-inositol 2-amino-2-deoxy-alpha-D-glucopyranoside ligase.